The following is a 224-amino-acid chain: ATP phosphoribosyltransferase (224 aa).

It belongs to the ATP phosphoribosyltransferase family. Short subfamily. Heteromultimer composed of HisG and HisZ subunits.

The protein resides in the cytoplasm. It carries out the reaction 1-(5-phospho-beta-D-ribosyl)-ATP + diphosphate = 5-phospho-alpha-D-ribose 1-diphosphate + ATP. Its pathway is amino-acid biosynthesis; L-histidine biosynthesis; L-histidine from 5-phospho-alpha-D-ribose 1-diphosphate: step 1/9. Catalyzes the condensation of ATP and 5-phosphoribose 1-diphosphate to form N'-(5'-phosphoribosyl)-ATP (PR-ATP). Has a crucial role in the pathway because the rate of histidine biosynthesis seems to be controlled primarily by regulation of HisG enzymatic activity. The polypeptide is ATP phosphoribosyltransferase (Cupriavidus metallidurans (strain ATCC 43123 / DSM 2839 / NBRC 102507 / CH34) (Ralstonia metallidurans)).